Here is a 447-residue protein sequence, read N- to C-terminus: Argininosuccinate synthase (447 aa).

ATP-binding positions include 12–20 (AYSGGLDTS) and A39. L-citrulline contacts are provided by Y92 and S97. Position 122 (G122) interacts with ATP. L-aspartate contacts are provided by T124, N128, and D129. Position 128 (N128) interacts with L-citrulline. Residues R132, S182, S191, E267, and Y279 each coordinate L-citrulline.

It belongs to the argininosuccinate synthase family. Type 1 subfamily. In terms of assembly, homotetramer.

The protein resides in the cytoplasm. The catalysed reaction is L-citrulline + L-aspartate + ATP = 2-(N(omega)-L-arginino)succinate + AMP + diphosphate + H(+). It functions in the pathway amino-acid biosynthesis; L-arginine biosynthesis; L-arginine from L-ornithine and carbamoyl phosphate: step 2/3. The sequence is that of Argininosuccinate synthase from Sulfurovum sp. (strain NBC37-1).